The chain runs to 471 residues: Glutamyl-tRNA(Gln) amidotransferase subunit A (471 aa).

Residues K66 and S141 each act as charge relay system in the active site. S165 functions as the Acyl-ester intermediate in the catalytic mechanism.

It belongs to the amidase family. GatA subfamily. Heterotrimer of A, B and C subunits.

It catalyses the reaction L-glutamyl-tRNA(Gln) + L-glutamine + ATP + H2O = L-glutaminyl-tRNA(Gln) + L-glutamate + ADP + phosphate + H(+). Its function is as follows. Allows the formation of correctly charged Gln-tRNA(Gln) through the transamidation of misacylated Glu-tRNA(Gln) in organisms which lack glutaminyl-tRNA synthetase. The reaction takes place in the presence of glutamine and ATP through an activated gamma-phospho-Glu-tRNA(Gln). In Thermus thermophilus (strain ATCC BAA-163 / DSM 7039 / HB27), this protein is Glutamyl-tRNA(Gln) amidotransferase subunit A.